The following is a 343-amino-acid chain: Protein RecA (343 aa).

ATP is bound at residue 64–71 (GPESSGKT).

It belongs to the RecA family.

The protein resides in the cytoplasm. In terms of biological role, can catalyze the hydrolysis of ATP in the presence of single-stranded DNA, the ATP-dependent uptake of single-stranded DNA by duplex DNA, and the ATP-dependent hybridization of homologous single-stranded DNAs. It interacts with LexA causing its activation and leading to its autocatalytic cleavage. The polypeptide is Protein RecA (Bacillus cereus (strain B4264)).